The following is a 757-amino-acid chain: Vitamin K-dependent gamma-carboxylase (757 aa).

Alanine 2 carries the post-translational modification N-acetylalanine. Over 2-60 (AVHRGSALVAPASDKVQKNKSAQTSGLKQGSRMEKILGFEWTDLSSWQSVVTLLNKPTD) the chain is Cytoplasmic. A helical transmembrane segment spans residues 61–81 (PANLAVFRFLFAFLMLLDIPQ). Over 82-113 (ERGLSSLDRKYLDGLDVCRFPLLDALRPLPLD) the chain is Lumenal. A disulfide bridge links cysteine 99 with cysteine 450. The chain crosses the membrane as a helical span at residues 114-134 (WMYLVYTIMFLGALGMMLGLC). Residues 135 to 136 (YR) are Cytoplasmic-facing. The chain crosses the membrane as a helical span at residues 137–157 (LSCVLFLLPYWYVFLLDKTSW). Topologically, residues 158 to 292 (NNHSYLYGLL…VSYFHCMNSQ (135 aa)) are lumenal. Residues 293 to 313 (LFSIGMFPYVMLASSPLFCSA) form a helical membrane-spanning segment. The Cytoplasmic segment spans residues 314 to 361 (EWPRKLVARCPKRLQELLPTKAAPRPSASCVYKRSRGKAGPKPGLRHQ). Residues 362 to 382 (LGAIFTLLYLLEQLFLPYSHF) form a helical membrane-spanning segment. The Lumenal segment spans residues 383–757 (LTQGYNNWTN…PDSEHVHSEF (375 aa)). Positions 729 to 757 (EPVDESSASNTDSSNHPSEPDSEHVHSEF) are disordered. The segment covering 734 to 745 (SSASNTDSSNHP) has biased composition (polar residues). Basic and acidic residues predominate over residues 746–757 (SEPDSEHVHSEF).

It belongs to the vitamin K-dependent gamma-carboxylase family. As to quaternary structure, monomer. May interact with CALU.

Its subcellular location is the endoplasmic reticulum membrane. The catalysed reaction is 4-carboxy-L-glutamyl-[protein] + 2,3-epoxyphylloquinone + H2O + H(+) = phylloquinol + L-glutamyl-[protein] + CO2 + O2. Its function is as follows. Mediates the vitamin K-dependent carboxylation of glutamate residues to calcium-binding gamma-carboxyglutamate (Gla) residues with the concomitant conversion of the reduced hydroquinone form of vitamin K to vitamin K epoxide. Catalyzes gamma-carboxylation of various proteins, such as blood coagulation factors (F2, F7, F9 and F10), osteocalcin (bglap and bglap2) or matrix Gla protein (MGP). In Mus musculus (Mouse), this protein is Vitamin K-dependent gamma-carboxylase (Ggcx).